Here is a 495-residue protein sequence, read N- to C-terminus: Acetyl-coenzyme A carboxylase carboxyl transferase subunit beta, chloroplastic (495 aa).

The tract at residues 187–208 (ESRNSSENEGSSRRTRTKGSDL) is disordered. In terms of domain architecture, CoA carboxyltransferase N-terminal spans 226–495 (LWVQCENCYG…PLNQKSSKIK (270 aa)). 4 residues coordinate Zn(2+): Cys-230, Cys-233, Cys-249, and Cys-252. Residues 230–252 (CENCYGLNYKKFLKSKMNICEQC) form a C4-type zinc finger.

Belongs to the AccD/PCCB family. In terms of assembly, acetyl-CoA carboxylase is a heterohexamer composed of biotin carboxyl carrier protein, biotin carboxylase and 2 subunits each of ACCase subunit alpha and ACCase plastid-coded subunit beta (accD). Requires Zn(2+) as cofactor. As to expression, RNA expressed in leaf, root and stem; the least expression occurs in stems.

The protein resides in the plastid. It is found in the chloroplast stroma. It catalyses the reaction N(6)-carboxybiotinyl-L-lysyl-[protein] + acetyl-CoA = N(6)-biotinyl-L-lysyl-[protein] + malonyl-CoA. It participates in lipid metabolism; malonyl-CoA biosynthesis; malonyl-CoA from acetyl-CoA: step 1/1. In terms of biological role, component of the acetyl coenzyme A carboxylase (ACC) complex. Biotin carboxylase (BC) catalyzes the carboxylation of biotin on its carrier protein (BCCP) and then the CO(2) group is transferred by the transcarboxylase to acetyl-CoA to form malonyl-CoA. The chain is Acetyl-coenzyme A carboxylase carboxyl transferase subunit beta, chloroplastic from Nicotiana tabacum (Common tobacco).